The chain runs to 1208 residues: Transient receptor potential cation channel subfamily M member 4 (1208 aa).

At 1–776 (MVGQEKEQSW…SYFWGAPVTA (776 aa)) the chain is on the cytoplasmic side. ATP is bound by residues Arg172, Arg215, and Leu226. Ca(2+) is bound by residues Asp271, Ala393, Asp396, and Glu397. Residues Arg422 and Gly449 each contribute to the ATP site. A phosphoserine mark is found at Ser527 and Ser538. Residues 777–797 (FLGNVVSYLLFLLLFAHVLLV) form a helical membrane-spanning segment. The Extracellular segment spans residues 798–808 (DFQPTKPGVFE). The chain crosses the membrane as a helical span at residues 809–829 (LLLYFWAFTLLCEELRQGLGG). Ca(2+) contacts are provided by Glu822 and Gln825. Residues 830-857 (GWGTLANGGPGPGKAPLRHRLHLYLLDT) lie on the Cytoplasmic side of the membrane. Residues 858–878 (WNQCDLLALTCFLLGVGCRLT) traverse the membrane as a helical segment. Residues Asn859 and Asp862 each contribute to the Ca(2+) site. Residues 879-880 (PG) lie on the Extracellular side of the membrane. The chain crosses the membrane as a helical span at residues 881–904 (LFDLGRTVLCLDFMIFTLRLLHIF). Over 905–924 (TVNKQLGPKIVIVSKMMKDV) the chain is Cytoplasmic. The helical transmembrane segment at 925–945 (FFFLFFLCVWLVAYGVATEGI) threads the bilayer. Topologically, residues 946-957 (LRPQDRSLPSIL) are extracellular. Positions 958–978 (RRVFYRPYLQIFGQIPQEEMD) form an intramembrane region, pore-forming. Residues 969 to 971 (FGQ) carry the Selectivity filter motif. Residues 979-1013 (VALMNPSNCSAERGSWAHPEGPVAGSCVSQYANWL) are Extracellular-facing. A disulfide bridge connects residues Cys987 and Cys1005. Residues 1014–1034 (VVLLLIVFLLVANILLLNLLI) traverse the membrane as a helical segment. Residues 1035-1208 (AMFSYTFNKV…PPPSPTGSKD (174 aa)) are Cytoplasmic-facing. The segment at 1070-1170 (APPLIIISHL…EYDRRLRGLE (101 aa)) is calmodulin-binding. Positions 1128 to 1180 (LAQARDKRDSDSERLKRTSQKVDTALKQLGQIREYDRRLRGLEREVQHCSRVL) form a coiled coil. A mediates modulation by decavanadate and PIP2-binding region spans residues 1130–1135 (QARDKR). Residues Ser1139 and Ser1146 each carry the phosphoserine; by PKC modification. Positions 1189–1208 (HSALLPPGGPPPPSPTGSKD) are disordered. Residues 1195–1208 (PGGPPPPSPTGSKD) are compositionally biased toward pro residues.

Belongs to the transient receptor (TC 1.A.4) family. LTrpC subfamily. TRPM4 sub-subfamily. As to quaternary structure, homotetramer. Post-translationally, phosphorylation by PKC leads to increase the sensitivity to Ca(2+). In terms of processing, sumoylated. Desumoylated by SENP1. In terms of tissue distribution, isoform 1 is highly expressed in the testis with a moderate expression in the brain, spleen and thymus. Isoform 2 is only expressed in the brain and spleen.

Its subcellular location is the cell membrane. It localises to the endoplasmic reticulum. The protein localises to the golgi apparatus. The catalysed reaction is Na(+)(in) = Na(+)(out). It carries out the reaction K(+)(in) = K(+)(out). With respect to regulation, gating is voltage-dependent and repressed by decavanadate. Calmodulin-binding confers the Ca(2+) sensitivity. ATP is able to restore Ca(2+) sensitivity after desensitization. Phosphatidylinositol 4,5-bisphosphate (PIP2)-binding strongly enhances activity, by increasing the channel's Ca(2+) sensitivity and shifting its voltage dependence of activation towards negative potentials. Activity is also enhanced by 3,5-bis(trifluoromethyl)pyrazole derivative (BTP2). Exhibits pronounced temperature sensitivity, with activities strongly intensifying near physiological temperatures. TRPM4 can adopt distinct conformations at different temperatures, markedly influencing where and how ligands interact with them. Its function is as follows. Calcium-activated selective cation channel that mediates membrane depolarization. While it is activated by increase in intracellular Ca(2+), it is impermeable to it. Mediates transport of monovalent cations (Na(+) &gt; K(+) &gt; Cs(+) &gt; Li(+)), leading to depolarize the membrane. It thereby plays a central role in cadiomyocytes, neurons from entorhinal cortex, dorsal root and vomeronasal neurons, endocrine pancreas cells, kidney epithelial cells, cochlea hair cells etc. Participates in T-cell activation by modulating Ca(2+) oscillations after T lymphocyte activation, which is required for NFAT-dependent IL2 production. Involved in myogenic constriction of cerebral arteries. Controls insulin secretion in pancreatic beta-cells. May also be involved in pacemaking or could cause irregular electrical activity under conditions of Ca(2+) overload. Affects T-helper 1 (Th1) and T-helper 2 (Th2) cell motility and cytokine production through differential regulation of calcium signaling and NFATC1 localization. Enhances cell proliferation through up-regulation of the beta-catenin signaling pathway. Plays a role in keratinocyte differentiation. In terms of biological role, lacks channel activity. This Rattus norvegicus (Rat) protein is Transient receptor potential cation channel subfamily M member 4 (Trpm4).